The sequence spans 307 residues: UPF0282 protein PH1002 (307 aa).

Belongs to the UPF0282 family.

This is UPF0282 protein PH1002 from Pyrococcus horikoshii (strain ATCC 700860 / DSM 12428 / JCM 9974 / NBRC 100139 / OT-3).